Reading from the N-terminus, the 481-residue chain is MTKKKTEKEKGINNGYITQVIGPVIDAVFSSGILPKIYNALEVQSKEGPIICEVQQLLGDNRVRAIAMSATDGLQRGVTVIDTQAPIAVPVGKATLGRIFNVLGQPVDNLSDSVGEDTLPIHRSAPAFTDLETKPAIFETGIKVVDLLAPYRRGGKIGLFGGAGVGKTVLIMELINNIAKAHGGVSVFGGVGERTREGNDLYMEMKESGVINETNLLESKVALVYGQMNEPPGARMRVGLTALTMAEYFRDINKQDVLLFIDNIFRFVQAGSEVSALLGRMPSAVGYQPTLGTEMGALQERITSTTQGSITSIQAVYVPADDLTDPAPATTFAHLDATTVLSRGLAAKGIYPAVDPLDSTSTMLQPLIVGDEHYKTAQLVKETLQRYKELQDIIAILGIDELSEEDRLVVDRARKIERFLSQPFFVAEVFTGSPGKYVDLENTIKGFNMILGGELDDLPEQAFYLVGDINEAISKAKTFKN.

161–168 (GGAGVGKT) is an ATP binding site.

The protein belongs to the ATPase alpha/beta chains family. As to quaternary structure, F-type ATPases have 2 components, CF(1) - the catalytic core - and CF(0) - the membrane proton channel. CF(1) has five subunits: alpha(3), beta(3), gamma(1), delta(1), epsilon(1). CF(0) has four main subunits: a(1), b(1), b'(1) and c(9-12).

It is found in the plastid. It localises to the chloroplast thylakoid membrane. It catalyses the reaction ATP + H2O + 4 H(+)(in) = ADP + phosphate + 5 H(+)(out). Its function is as follows. Produces ATP from ADP in the presence of a proton gradient across the membrane. The catalytic sites are hosted primarily by the beta subunits. In Pylaiella littoralis (Seaweed), this protein is ATP synthase subunit beta, chloroplastic.